The following is a 333-amino-acid chain: Holliday junction branch migration complex subunit RuvB (333 aa).

Residues 1–182 (MDERLLSGES…FGVLSRLEYY (182 aa)) form a large ATPase domain (RuvB-L) region. ATP-binding positions include leucine 21, arginine 22, glycine 63, lysine 66, threonine 67, threonine 68, 129-131 (EDF), arginine 172, tyrosine 182, and arginine 219. Residue threonine 67 participates in Mg(2+) binding. Positions 183 to 253 (TVDQLSAIVE…ITQMALELLQ (71 aa)) are small ATPAse domain (RuvB-S). Residues 256–333 (KLGLDHIDHK…QHFGMEMPKI (78 aa)) are head domain (RuvB-H). DNA is bound by residues arginine 311 and arginine 316.

The protein belongs to the RuvB family. As to quaternary structure, homohexamer. Forms an RuvA(8)-RuvB(12)-Holliday junction (HJ) complex. HJ DNA is sandwiched between 2 RuvA tetramers; dsDNA enters through RuvA and exits via RuvB. An RuvB hexamer assembles on each DNA strand where it exits the tetramer. Each RuvB hexamer is contacted by two RuvA subunits (via domain III) on 2 adjacent RuvB subunits; this complex drives branch migration. In the full resolvosome a probable DNA-RuvA(4)-RuvB(12)-RuvC(2) complex forms which resolves the HJ.

The protein localises to the cytoplasm. It carries out the reaction ATP + H2O = ADP + phosphate + H(+). Functionally, the RuvA-RuvB-RuvC complex processes Holliday junction (HJ) DNA during genetic recombination and DNA repair, while the RuvA-RuvB complex plays an important role in the rescue of blocked DNA replication forks via replication fork reversal (RFR). RuvA specifically binds to HJ cruciform DNA, conferring on it an open structure. The RuvB hexamer acts as an ATP-dependent pump, pulling dsDNA into and through the RuvAB complex. RuvB forms 2 homohexamers on either side of HJ DNA bound by 1 or 2 RuvA tetramers; 4 subunits per hexamer contact DNA at a time. Coordinated motions by a converter formed by DNA-disengaged RuvB subunits stimulates ATP hydrolysis and nucleotide exchange. Immobilization of the converter enables RuvB to convert the ATP-contained energy into a lever motion, pulling 2 nucleotides of DNA out of the RuvA tetramer per ATP hydrolyzed, thus driving DNA branch migration. The RuvB motors rotate together with the DNA substrate, which together with the progressing nucleotide cycle form the mechanistic basis for DNA recombination by continuous HJ branch migration. Branch migration allows RuvC to scan DNA until it finds its consensus sequence, where it cleaves and resolves cruciform DNA. This Bacillus cytotoxicus (strain DSM 22905 / CIP 110041 / 391-98 / NVH 391-98) protein is Holliday junction branch migration complex subunit RuvB.